A 266-amino-acid chain; its full sequence is Methyl-coenzyme M reductase II subunit gamma (266 aa).

R123 contacts coenzyme M.

This sequence belongs to the methyl-coenzyme M reductase gamma subunit family. In terms of assembly, MCR is a hexamer of two alpha, two beta, and two gamma chains, forming a dimer of heterotrimers. It depends on coenzyme F430 as a cofactor.

It catalyses the reaction coenzyme B + methyl-coenzyme M = methane + coenzyme M-coenzyme B heterodisulfide. It participates in one-carbon metabolism; methyl-coenzyme M reduction; methane from methyl-coenzyme M: step 1/1. Functionally, component of the methyl-coenzyme M reductase (MCR) I that catalyzes the reductive cleavage of methyl-coenzyme M (CoM-S-CH3 or 2-(methylthio)ethanesulfonate) using coenzyme B (CoB or 7-mercaptoheptanoylthreonine phosphate) as reductant which results in the production of methane and the mixed heterodisulfide of CoB and CoM (CoM-S-S-CoB). This is the final step in methanogenesis. This chain is Methyl-coenzyme M reductase II subunit gamma (mrtG), found in Methanocaldococcus jannaschii (strain ATCC 43067 / DSM 2661 / JAL-1 / JCM 10045 / NBRC 100440) (Methanococcus jannaschii).